A 660-amino-acid polypeptide reads, in one-letter code: Translation factor GUF1 homolog, mitochondrial (660 aa).

A tr-type G domain is found at 62–243 (EKIRNFSIIA…TIIEKIPPPT (182 aa)). GTP contacts are provided by residues 71–78 (AHIDHGKS), 136–140 (DTPGH), and 190–193 (NKID).

It belongs to the TRAFAC class translation factor GTPase superfamily. Classic translation factor GTPase family. LepA subfamily.

The protein resides in the mitochondrion inner membrane. It catalyses the reaction GTP + H2O = GDP + phosphate + H(+). In terms of biological role, promotes mitochondrial protein synthesis. May act as a fidelity factor of the translation reaction, by catalyzing a one-codon backward translocation of tRNAs on improperly translocated ribosomes. Binds to mitochondrial ribosomes in a GTP-dependent manner. This Trichoplax adhaerens (Trichoplax reptans) protein is Translation factor GUF1 homolog, mitochondrial.